The sequence spans 111 residues: Movement protein TGB2 (111 aa).

Residues 1–16 (MSSHQNFLTPPPDHSK) are Cytoplasmic-facing. A helical membrane pass occupies residues 17-37 (AILAVAVGVGLAIVLHFSLSY). Over 38-72 (KLPSPGDNIHSLPFGGTYRDGTKSIIYNSPHRGPG) the chain is Lumenal. The helical transmembrane segment at 73 to 93 (QSGALPIITVFAIIECTLHVL) threads the bilayer. Topologically, residues 94–111 (RKRDNPVRPQHSDCPNCS) are cytoplasmic.

The protein belongs to the Tymovirales TGBp2 protein family.

Its subcellular location is the host endoplasmic reticulum membrane. Functionally, plays a role in viral cell-to-cell propagation, by facilitating genome transport to neighboring plant cells through plasmosdesmata,. This is Movement protein TGB2 from Carica papaya (Papaya).